The primary structure comprises 210 residues: Na(+)-translocating NADH-quinone reductase subunit D (210 aa).

6 helical membrane-spanning segments follow: residues 9–29 (AVLF…LGIC), 42–62 (LIMS…ISTI), 72–92 (IIVQ…VLQA), 96–116 (ATAK…IVMG), 131–151 (FLDG…VGFI), and 178–198 (MGLL…IWVL).

The protein belongs to the NqrDE/RnfAE family. As to quaternary structure, composed of six subunits; NqrA, NqrB, NqrC, NqrD, NqrE and NqrF.

It localises to the cell inner membrane. The catalysed reaction is a ubiquinone + n Na(+)(in) + NADH + H(+) = a ubiquinol + n Na(+)(out) + NAD(+). NQR complex catalyzes the reduction of ubiquinone-1 to ubiquinol by two successive reactions, coupled with the transport of Na(+) ions from the cytoplasm to the periplasm. NqrA to NqrE are probably involved in the second step, the conversion of ubisemiquinone to ubiquinol. This Pseudoalteromonas translucida (strain TAC 125) protein is Na(+)-translocating NADH-quinone reductase subunit D.